Here is a 161-residue protein sequence, read N- to C-terminus: Ribosome maturation factor RimP (161 aa).

It belongs to the RimP family.

The protein localises to the cytoplasm. In terms of biological role, required for maturation of 30S ribosomal subunits. This Janthinobacterium sp. (strain Marseille) (Minibacterium massiliensis) protein is Ribosome maturation factor RimP.